Consider the following 404-residue polypeptide: D-galactonate dehydratase family member Ent638_1932 (404 aa).

Residues asparagine 37 and histidine 122 each contribute to the substrate site. Catalysis depends on tyrosine 159, which acts as the Proton donor/acceptor. Aspartate 212 contributes to the Mg(2+) binding site. Histidine 214 (proton donor/acceptor) is an active-site residue. Mg(2+) contacts are provided by glutamate 238 and glutamate 264. Glutamate 264, arginine 285, histidine 314, aspartate 318, and glutamate 341 together coordinate substrate.

The protein belongs to the mandelate racemase/muconate lactonizing enzyme family. GalD subfamily. Requires Mg(2+) as cofactor.

It carries out the reaction D-mannonate = 2-dehydro-3-deoxy-D-gluconate + H2O. Functionally, has low D-mannonate dehydratase activity (in vitro), suggesting that this is not a physiological substrate and that it has no significant role in D-mannonate degradation in vivo. Has no detectable activity with a panel of 70 other acid sugars (in vitro). This is D-galactonate dehydratase family member Ent638_1932 from Enterobacter sp. (strain 638).